We begin with the raw amino-acid sequence, 238 residues long: Ribosomal RNA small subunit methyltransferase G (238 aa).

S-adenosyl-L-methionine contacts are provided by residues G77, F82, 128-129, and R147; that span reads AE. The tract at residues 216 to 238 is disordered; it reads RKERSTPKKYPRKPGTPNKQPLS.

This sequence belongs to the methyltransferase superfamily. RNA methyltransferase RsmG family.

The protein resides in the cytoplasm. Specifically methylates the N7 position of guanine in position 535 of 16S rRNA. In Halalkalibacterium halodurans (strain ATCC BAA-125 / DSM 18197 / FERM 7344 / JCM 9153 / C-125) (Bacillus halodurans), this protein is Ribosomal RNA small subunit methyltransferase G.